A 220-amino-acid polypeptide reads, in one-letter code: Fructose-6-phosphate aldolase 2 (220 aa).

K85 serves as the catalytic Schiff-base intermediate with substrate.

It belongs to the transaldolase family. Type 3A subfamily. Homodecamer.

The protein resides in the cytoplasm. It catalyses the reaction beta-D-fructose 6-phosphate = dihydroxyacetone + D-glyceraldehyde 3-phosphate. Functionally, catalyzes the reversible formation of fructose 6-phosphate from dihydroxyacetone and D-glyceraldehyde 3-phosphate via an aldolization reaction. The polypeptide is Fructose-6-phosphate aldolase 2 (fsaB) (Escherichia coli O6:H1 (strain CFT073 / ATCC 700928 / UPEC)).